We begin with the raw amino-acid sequence, 844 residues long: Rho guanine nucleotide exchange factor 33 (844 aa).

Basic and acidic residues-rich tracts occupy residues 1–13 (MEKT…ENEH) and 101–113 (QQKI…EKRR). Disordered regions lie at residues 1–20 (MEKT…NNPS), 101–142 (QQKI…GSPF), and 169–189 (AQES…MGPG). Residues 54-129 (LEEKVKSCRC…AKKTQKEEHS (76 aa)) adopt a coiled-coil conformation. Polar residues predominate over residues 130–142 (SQAGPAQAQGSPF). One can recognise a DH domain in the interval 265 to 440 (KRQTVALELL…RVFISHYTLL (176 aa)). 3 disordered regions span residues 498–541 (LQPY…DWEL), 668–687 (RPEH…AGSS), and 702–745 (AKPL…RAAQ). At Arg-757 the chain carries Omega-N-methylarginine. Positions 787–800 (DTTRFCPKEERESE) are enriched in basic and acidic residues. Residues 787–844 (DTTRFCPKEERESEQTSFSDQNPRQDQKGGFRSSFRKLFKKKNGNATGEDFCGPWGWW) form a disordered region. Residues 820–829 (SFRKLFKKKN) are compositionally biased toward basic residues.

Its function is as follows. May act as a guanine-nucleotide releasing factor. This is Rho guanine nucleotide exchange factor 33 (ARHGEF33) from Homo sapiens (Human).